Reading from the N-terminus, the 249-residue chain is Phosphate import ATP-binding protein PstB (249 aa).

One can recognise an ABC transporter domain in the interval 3–244 (IEANDVHVYY…PKKKRTQNYI (242 aa)). ATP is bound at residue 35–42 (GPSGCGKS).

The protein belongs to the ABC transporter superfamily. Phosphate importer (TC 3.A.1.7) family. The complex is composed of two ATP-binding proteins (PstB), two transmembrane proteins (PstC and PstA) and a solute-binding protein (PstS).

It localises to the cell inner membrane. The enzyme catalyses phosphate(out) + ATP + H2O = ADP + 2 phosphate(in) + H(+). In terms of biological role, part of the ABC transporter complex PstSACB involved in phosphate import. Responsible for energy coupling to the transport system. The protein is Phosphate import ATP-binding protein PstB of Cytophaga hutchinsonii (strain ATCC 33406 / DSM 1761 / CIP 103989 / NBRC 15051 / NCIMB 9469 / D465).